A 280-amino-acid chain; its full sequence is Extracellular metalloprotease GLRG_06286 (280 aa).

Residues 1 to 17 (MQVTFTLVAALAGMASA) form the signal peptide. N-linked (GlcNAc...) asparagine glycosylation occurs at N51. H196 contributes to the Zn(2+) binding site. Residue E197 is part of the active site. Residue H200 coordinates Zn(2+). Residues 217-236 (DSIADTPAQSSPSSGCPVGR) are disordered. Cysteines 232 and 259 form a disulfide.

It belongs to the peptidase M43B family.

The protein resides in the secreted. In terms of biological role, secreted metalloproteinase that allows assimilation of proteinaceous substrates. The protein is Extracellular metalloprotease GLRG_06286 of Colletotrichum graminicola (strain M1.001 / M2 / FGSC 10212) (Maize anthracnose fungus).